Here is a 170-residue protein sequence, read N- to C-terminus: Adenine phosphoribosyltransferase (170 aa).

It belongs to the purine/pyrimidine phosphoribosyltransferase family. In terms of assembly, homodimer.

It is found in the cytoplasm. It carries out the reaction AMP + diphosphate = 5-phospho-alpha-D-ribose 1-diphosphate + adenine. It functions in the pathway purine metabolism; AMP biosynthesis via salvage pathway; AMP from adenine: step 1/1. Its function is as follows. Catalyzes a salvage reaction resulting in the formation of AMP, that is energically less costly than de novo synthesis. This chain is Adenine phosphoribosyltransferase, found in Thermotoga petrophila (strain ATCC BAA-488 / DSM 13995 / JCM 10881 / RKU-1).